Here is a 367-residue protein sequence, read N- to C-terminus: Type II methyltransferase M.CviJI (367 aa).

The region spanning 3 to 367 (FRTLELFAGI…EYLGYLVQYD (365 aa)) is the SAM-dependent MTase C5-type domain. Cys73 is an active-site residue.

It belongs to the class I-like SAM-binding methyltransferase superfamily. C5-methyltransferase family.

The catalysed reaction is a 2'-deoxycytidine in DNA + S-adenosyl-L-methionine = a 5-methyl-2'-deoxycytidine in DNA + S-adenosyl-L-homocysteine + H(+). Functionally, a methylase that recognizes the double-stranded sequence 5'-RGCY-3', methylates C-3 on both strands, and protects the DNA from cleavage by the CviJI endonuclease. This is Type II methyltransferase M.CviJI from Chlorella (PBCV-IL3A).